The chain runs to 191 residues: ECF RNA polymerase sigma factor ShbA (191 aa).

The segment at 27 to 98 is sigma-70 factor domain-2; the sequence is LLAHVHPLAL…HKVADLQRAA (72 aa). The disordered stretch occupies residues 100–122; it reads RHPGSTAVPSDEMPERPDDSLGP. Residues 112 to 122 show a composition bias toward basic and acidic residues; the sequence is MPERPDDSLGP. The interval 138–187 is sigma-70 factor domain-4; it reads LLANLPENQRELLVLRVAVGLTAEETGQMLGMSPGAVRVAQHRALSRLRA. The H-T-H motif DNA-binding region spans 160 to 179; it reads AEETGQMLGMSPGAVRVAQH.

It belongs to the sigma-70 factor family. ECF subfamily.

Its function is as follows. Sigma factors are initiation factors that promote the attachment of RNA polymerase to specific initiation sites and are then released. Extracytoplasmic function (ECF) sigma factors are held in an inactive form by an anti-sigma factor until released. This alternative sigma factor governs the transcription of the principal sigma factor HrdB (SigA) throughout growth. Acts by binding to the promoter region. The protein is ECF RNA polymerase sigma factor ShbA of Streptomyces griseus subsp. griseus (strain JCM 4626 / CBS 651.72 / NBRC 13350 / KCC S-0626 / ISP 5235).